A 309-amino-acid chain; its full sequence is Taste receptor type 2 member 124 (309 aa).

Over 1 to 7 the chain is Extracellular; the sequence is MVPVLHS. The helical transmembrane segment at 8-28 threads the bilayer; the sequence is LSTIILIAEFVWGNLSNGLIV. Residues 29 to 46 lie on the Cytoplasmic side of the membrane; it reads LKNCIDWINKKELSTVDQ. Residues 47–67 traverse the membrane as a helical segment; that stretch reads ILIVLAISRISLIWETLIIWV. At 68–86 the chain is on the extracellular side; it reads KDQLISSITIEELKIIVFS. Residues 87–107 traverse the membrane as a helical segment; the sequence is FILSSHFSLWLATALSIFYLF. The Cytoplasmic portion of the chain corresponds to 108-127; sequence RIPNCYWQIFLYLKWRIKQL. A helical transmembrane segment spans residues 128 to 148; sequence IVHMLLGSLVFLVANMIQITI. Residues 149 to 183 lie on the Extracellular side of the membrane; sequence TLEERFYQYGGNTSVNSMETEFSILIELMLFNMTM. N-linked (GlcNAc...) asparagine glycosylation is found at asparagine 160 and asparagine 180. A helical membrane pass occupies residues 184-204; that stretch reads FSIIPFSLALISFLLLIFSLW. Topologically, residues 205 to 230 are cytoplasmic; it reads KHLQKMPLNSRGDRDPSATAHRNALR. A helical membrane pass occupies residues 231–251; the sequence is ILVSFLLLYTIYFLSLLISWV. The Extracellular portion of the chain corresponds to 252 to 261; it reads AQKNQSELVH. N-linked (GlcNAc...) asparagine glycosylation occurs at asparagine 255. Residues 262-282 form a helical membrane-spanning segment; it reads IICMITSLVYPSFHSYILILG. Residues 283–309 lie on the Cytoplasmic side of the membrane; the sequence is NYKLKQTSLWVMRQLGCRMKRQNTPTT.

It belongs to the G-protein coupled receptor T2R family.

The protein localises to the membrane. In terms of biological role, putative taste receptor which may play a role in the perception of bitterness. This is Taste receptor type 2 member 124 from Mus musculus (Mouse).